A 105-amino-acid chain; its full sequence is uncharacterized protein (105 aa).

Residues 33-100 (LYALDAGTTD…SEDLRVLVVF (68 aa)) enclose the Cupin type-2 domain.

This is an uncharacterized protein from Streptomyces coelicolor (strain ATCC BAA-471 / A3(2) / M145).